We begin with the raw amino-acid sequence, 404 residues long: Cysteine desulfurase IscS (404 aa).

Pyridoxal 5'-phosphate-binding positions include 75 to 76 (AT), N155, Q183, and 203 to 205 (SGH). Position 206 is an N6-(pyridoxal phosphate)lysine (K206). T243 lines the pyridoxal 5'-phosphate pocket. C328 functions as the Cysteine persulfide intermediate in the catalytic mechanism. A [2Fe-2S] cluster-binding site is contributed by C328.

Belongs to the class-V pyridoxal-phosphate-dependent aminotransferase family. NifS/IscS subfamily. In terms of assembly, homodimer. Forms a heterotetramer with IscU, interacts with other sulfur acceptors. It depends on pyridoxal 5'-phosphate as a cofactor.

Its subcellular location is the cytoplasm. The enzyme catalyses (sulfur carrier)-H + L-cysteine = (sulfur carrier)-SH + L-alanine. Its pathway is cofactor biosynthesis; iron-sulfur cluster biosynthesis. Functionally, master enzyme that delivers sulfur to a number of partners involved in Fe-S cluster assembly, tRNA modification or cofactor biosynthesis. Catalyzes the removal of elemental sulfur and selenium atoms from cysteine and selenocysteine to produce alanine. Functions as a sulfur delivery protein for Fe-S cluster synthesis onto IscU, an Fe-S scaffold assembly protein, as well as other S acceptor proteins. Also functions as a selenium delivery protein in the pathway for the biosynthesis of selenophosphate. This chain is Cysteine desulfurase IscS, found in Salmonella arizonae (strain ATCC BAA-731 / CDC346-86 / RSK2980).